Here is a 381-residue protein sequence, read N- to C-terminus: Sulfofructose kinase (381 aa).

ATP contacts are provided by residues Gly10, 72-73 (RY), and 100-103 (GNGT). Asn101 is a Mg(2+) binding site. Asp131 acts as the Proton acceptor in catalysis.

This sequence belongs to the phosphofructokinase type A (PFKA) family. Mg(2+) is required as a cofactor.

The catalysed reaction is 6-deoxy-6-sulfo-D-fructose + ATP = 6-deoxy-6-sulfo-D-fructose 1-phosphate + ADP + H(+). Part of the sulfo-EMP2 pathway, a D-sulfoquinovose degradation pathway that produces sulfolactate (SL). Phosphorylates 6-deoxy-6-sulfo-D-fructose (SF) to 6-deoxy-6-sulfo-D-fructose 1-phosphate (SFP). This Alkalicoccus urumqiensis (Bacillus urumqiensis) protein is Sulfofructose kinase.